We begin with the raw amino-acid sequence, 549 residues long: Probable serine/threonine-protein kinase WNK5 (549 aa).

The region spanning 25–283 (GRFREVLGKG…AKELLADPFL (259 aa)) is the Protein kinase domain. Residues 105–108 (TELF) and lysine 155 contribute to the ATP site. Aspartate 172 functions as the Proton acceptor in the catalytic mechanism. Residues 414–490 (ESFGHEDDED…SPAIDDDQNQ (77 aa)) form a disordered region. A compositionally biased stretch (acidic residues) spans 452–463 (DDSSNDVIPDMD). Over residues 467-476 (RSSNRLLNSS) the composition is skewed to low complexity. Serine 504 carries the post-translational modification Phosphoserine. A disordered region spans residues 525–549 (RGRGFDPNTNELQPQPSSTDFIRRC). Positions 531 to 549 (PNTNELQPQPSSTDFIRRC) are enriched in polar residues.

This sequence belongs to the protein kinase superfamily. Ser/Thr protein kinase family. WNK subfamily. As to quaternary structure, interacts with AHK4.

It catalyses the reaction L-seryl-[protein] + ATP = O-phospho-L-seryl-[protein] + ADP + H(+). The catalysed reaction is L-threonyl-[protein] + ATP = O-phospho-L-threonyl-[protein] + ADP + H(+). In terms of biological role, regulates flowering time by modulating the photoperiod pathway. This Arabidopsis thaliana (Mouse-ear cress) protein is Probable serine/threonine-protein kinase WNK5 (WNK5).